The following is a 211-amino-acid chain: Probable molybdenum cofactor guanylyltransferase (211 aa).

Residues 21–23, Lys-33, Asp-84, and Asp-116 contribute to the GTP site; that span reads LAG. Mg(2+) is bound at residue Asp-116.

The protein belongs to the MobA family. Mg(2+) is required as a cofactor.

The protein resides in the cytoplasm. The catalysed reaction is Mo-molybdopterin + GTP + H(+) = Mo-molybdopterin guanine dinucleotide + diphosphate. In terms of biological role, transfers a GMP moiety from GTP to Mo-molybdopterin (Mo-MPT) cofactor (Moco or molybdenum cofactor) to form Mo-molybdopterin guanine dinucleotide (Mo-MGD) cofactor. This is Probable molybdenum cofactor guanylyltransferase from Rhodopirellula baltica (strain DSM 10527 / NCIMB 13988 / SH1).